A 274-amino-acid polypeptide reads, in one-letter code: MQQLQNIIETAFERRAEITPANADTVTREAVNQVIALLDSGALRVAEKIDGQWVTHQWLKKAVLLSFRINDNQVIEGAESRYFDKVPMKFANYDAARFQKEGFRVVPPAAVRQGAFIARNTVLMPSYVNIGAYVDEGTMVDTWATVGSCAQIGKNVHLSGGVGIGGVLEPLQANPTIIEDNCFIGARSEVVEGVIVEEGSVISMGVYIGQSTRIYDRETGEIHYGRVPAGSVVVSGNLPSKDGKYSLYCAVIVKKVDAKTRGKVGINELLRTID.

The protein belongs to the transferase hexapeptide repeat family.

It localises to the cytoplasm. It carries out the reaction (S)-2,3,4,5-tetrahydrodipicolinate + succinyl-CoA + H2O = (S)-2-succinylamino-6-oxoheptanedioate + CoA. Its pathway is amino-acid biosynthesis; L-lysine biosynthesis via DAP pathway; LL-2,6-diaminopimelate from (S)-tetrahydrodipicolinate (succinylase route): step 1/3. This is 2,3,4,5-tetrahydropyridine-2,6-dicarboxylate N-succinyltransferase from Escherichia coli (strain SMS-3-5 / SECEC).